The sequence spans 400 residues: S-adenosylmethionine synthase (400 aa).

Histidine 17 lines the ATP pocket. Aspartate 19 provides a ligand contact to Mg(2+). Glutamate 45 contacts K(+). The L-methionine site is built by glutamate 58 and glutamine 101. Positions 101 to 111 (QSADIAMGVDQ) are flexible loop. ATP is bound by residues 177–179 (DGK), 244–245 (RF), aspartate 253, 259–260 (RK), alanine 276, and lysine 280. Aspartate 253 contributes to the L-methionine binding site. An L-methionine-binding site is contributed by lysine 284.

The protein belongs to the AdoMet synthase family. As to quaternary structure, homotetramer; dimer of dimers. Mg(2+) is required as a cofactor. The cofactor is K(+).

It localises to the cytoplasm. The catalysed reaction is L-methionine + ATP + H2O = S-adenosyl-L-methionine + phosphate + diphosphate. It participates in amino-acid biosynthesis; S-adenosyl-L-methionine biosynthesis; S-adenosyl-L-methionine from L-methionine: step 1/1. In terms of biological role, catalyzes the formation of S-adenosylmethionine (AdoMet) from methionine and ATP. The overall synthetic reaction is composed of two sequential steps, AdoMet formation and the subsequent tripolyphosphate hydrolysis which occurs prior to release of AdoMet from the enzyme. The polypeptide is S-adenosylmethionine synthase (Bacillus velezensis (strain DSM 23117 / BGSC 10A6 / LMG 26770 / FZB42) (Bacillus amyloliquefaciens subsp. plantarum)).